Here is a 569-residue protein sequence, read N- to C-terminus: Proline--tRNA ligase (569 aa).

Belongs to the class-II aminoacyl-tRNA synthetase family. ProS type 1 subfamily. In terms of assembly, homodimer.

Its subcellular location is the cytoplasm. The enzyme catalyses tRNA(Pro) + L-proline + ATP = L-prolyl-tRNA(Pro) + AMP + diphosphate. Its function is as follows. Catalyzes the attachment of proline to tRNA(Pro) in a two-step reaction: proline is first activated by ATP to form Pro-AMP and then transferred to the acceptor end of tRNA(Pro). As ProRS can inadvertently accommodate and process non-cognate amino acids such as alanine and cysteine, to avoid such errors it has two additional distinct editing activities against alanine. One activity is designated as 'pretransfer' editing and involves the tRNA(Pro)-independent hydrolysis of activated Ala-AMP. The other activity is designated 'posttransfer' editing and involves deacylation of mischarged Ala-tRNA(Pro). The misacylated Cys-tRNA(Pro) is not edited by ProRS. This chain is Proline--tRNA ligase, found in Nitrosospira multiformis (strain ATCC 25196 / NCIMB 11849 / C 71).